A 479-amino-acid chain; its full sequence is MSILVKNNIHWVGQRDWEVRDFHGTEYKTLRGSSYNSYLIREEKNVLIDTVDHKFSREFVQNLRSEIDLADIDYIIINHAEEDHAGALTELMAQIPDTPIYCTANAIDSINGHHHHPEWNFKVVKTGDTLDIGNGKQLIFVETPMLHWPDSMMTYMTGDAVLFSNDAFGQHYCDERLFNDEVDQTELFEQCQRYYANILTPFSRLVTPKITEILGFNLPVDMIATSHGVVWRDNPTQIVELYLKWAADYQEDRITIFYDTMSNNTRMMADAIAQGINEVDPNVAVKIFNVARSDKNEILTNVFRSKGVLVGTSTMNNVMMPKIAGLVEEMTGLRFRNKRASAFGSHGWSGGAVDRLSTRLQDAGFEMSLSLKAKWRPDLDALELCRQHGRDIARQWALAPLPETTQKTAPAEEITTCVAADLGPKMQCSVCQWIYDPAQGEPLQDVAPGTPWSDVPDNFLCPECSLGKDVFDVLATEAK.

The interval 30–210 (LRGSSYNSYL…PFSRLVTPKI (181 aa)) is zinc metallo-hydrolase. The Fe cation site is built by H79, E81, D83, H147, D166, and H227. In terms of domain architecture, Flavodoxin-like spans 254–393 (ITIFYDTMSN…LCRQHGRDIA (140 aa)). FMN contacts are provided by residues 260–264 (TMSNN) and 342–369 (AFGS…EMSL). The region spanning 423-474 (GPKMQCSVCQWIYDPAQGEPLQDVAPGTPWSDVPDNFLCPECSLGKDVFDVL) is the Rubredoxin-like domain. Residues C428, C431, C461, and C464 each coordinate Fe cation.

The protein in the N-terminal section; belongs to the zinc metallo-hydrolase group 3 family. As to quaternary structure, homotetramer. Fe cation serves as cofactor. It depends on FMN as a cofactor.

The protein localises to the cytoplasm. It participates in nitrogen metabolism; nitric oxide reduction. In terms of biological role, anaerobic nitric oxide reductase; uses NADH to detoxify nitric oxide (NO), protecting several 4Fe-4S NO-sensitive enzymes. Has at least 2 reductase partners, only one of which (NorW, flavorubredoxin reductase) has been identified. NO probably binds to the di-iron center; electrons enter from the NorW at rubredoxin and are transferred sequentially to the FMN center and the di-iron center. Also able to function as an aerobic oxygen reductase. In Salmonella choleraesuis (strain SC-B67), this protein is Anaerobic nitric oxide reductase flavorubredoxin.